A 149-amino-acid polypeptide reads, in one-letter code: MRIVIQKVSQAMVKVDNEIVSQIAKGYMLLVGISTEDTIADAQKLSNKVLNLRLFETGDQFWKHSIQDVQGEILSVSQFTLMARTKKGNKPDFHKAQKGEHAQELYNQFLDLLKTTLGADKVKDGQFGAMMSCSLTNEGPVTIILDSTE.

The short motif at 139 to 140 (GP) is the Gly-cisPro motif, important for rejection of L-amino acids element.

Belongs to the DTD family. As to quaternary structure, homodimer.

It localises to the cytoplasm. It catalyses the reaction glycyl-tRNA(Ala) + H2O = tRNA(Ala) + glycine + H(+). It carries out the reaction a D-aminoacyl-tRNA + H2O = a tRNA + a D-alpha-amino acid + H(+). Functionally, an aminoacyl-tRNA editing enzyme that deacylates mischarged D-aminoacyl-tRNAs. Also deacylates mischarged glycyl-tRNA(Ala), protecting cells against glycine mischarging by AlaRS. Acts via tRNA-based rather than protein-based catalysis; rejects L-amino acids rather than detecting D-amino acids in the active site. By recycling D-aminoacyl-tRNA to D-amino acids and free tRNA molecules, this enzyme counteracts the toxicity associated with the formation of D-aminoacyl-tRNA entities in vivo and helps enforce protein L-homochirality. In Candida glabrata (strain ATCC 2001 / BCRC 20586 / JCM 3761 / NBRC 0622 / NRRL Y-65 / CBS 138) (Yeast), this protein is D-aminoacyl-tRNA deacylase (DTD1).